The following is a 438-amino-acid chain: Glutaryl-CoA dehydrogenase, mitochondrial (438 aa).

The N-terminal 44 residues, 1–44 (MALRGVSVQLLSRVPGLRVFRTWVSSAAQTEKVGRTQSQLAKSS), are a transit peptide targeting the mitochondrion. Substrate contacts are provided by residues 138-139 (RS) and Ser186. FAD is bound by residues 177 to 186 (FGLTEPNSGS), Ser186, and 212 to 214 (WIT). Residue Lys240 is modified to N6-acetyllysine. 287 to 294 (FGCLNNGR) provides a ligand contact to substrate. FAD is bound by residues Arg319, Gln330, and 387–391 (DMLGG). Glu414 serves as the catalytic Proton acceptor. Gly415 contributes to the substrate binding site. FAD is bound by residues Thr416, 416–418 (THD), and Phe434.

The protein belongs to the acyl-CoA dehydrogenase family. Homotetramer. The cofactor is FAD.

The protein localises to the mitochondrion matrix. It catalyses the reaction glutaryl-CoA + oxidized [electron-transfer flavoprotein] + 2 H(+) = (2E)-butenoyl-CoA + reduced [electron-transfer flavoprotein] + CO2. The protein operates within amino-acid metabolism; lysine degradation. It functions in the pathway amino-acid metabolism; tryptophan metabolism. Functionally, catalyzes the oxidative decarboxylation of glutaryl-CoA to crotonyl-CoA and CO(2) in the degradative pathway of L-lysine, L-hydroxylysine, and L-tryptophan metabolism. It uses electron transfer flavoprotein as its electron acceptor. This Macaca fascicularis (Crab-eating macaque) protein is Glutaryl-CoA dehydrogenase, mitochondrial (GCDH).